Reading from the N-terminus, the 179-residue chain is Pyridoxal 5'-phosphate synthase subunit PdxT (179 aa).

48-50 (GES) contacts L-glutamine. Catalysis depends on Cys79, which acts as the Nucleophile. L-glutamine is bound by residues Arg101 and 127–128 (IR). Residues His163 and Glu165 each act as charge relay system in the active site.

This sequence belongs to the glutaminase PdxT/SNO family. In the presence of PdxS, forms a dodecamer of heterodimers. Only shows activity in the heterodimer.

It catalyses the reaction aldehydo-D-ribose 5-phosphate + D-glyceraldehyde 3-phosphate + L-glutamine = pyridoxal 5'-phosphate + L-glutamate + phosphate + 3 H2O + H(+). It carries out the reaction L-glutamine + H2O = L-glutamate + NH4(+). It participates in cofactor biosynthesis; pyridoxal 5'-phosphate biosynthesis. Functionally, catalyzes the hydrolysis of glutamine to glutamate and ammonia as part of the biosynthesis of pyridoxal 5'-phosphate. The resulting ammonia molecule is channeled to the active site of PdxS. The sequence is that of Pyridoxal 5'-phosphate synthase subunit PdxT from Francisella tularensis subsp. holarctica (strain FTNF002-00 / FTA).